The sequence spans 287 residues: Bifunctional protein FolD (287 aa).

NADP(+)-binding positions include 160-162 (GRS), S189, and T230.

Belongs to the tetrahydrofolate dehydrogenase/cyclohydrolase family. In terms of assembly, homodimer.

It catalyses the reaction (6R)-5,10-methylene-5,6,7,8-tetrahydrofolate + NADP(+) = (6R)-5,10-methenyltetrahydrofolate + NADPH. The catalysed reaction is (6R)-5,10-methenyltetrahydrofolate + H2O = (6R)-10-formyltetrahydrofolate + H(+). Its pathway is one-carbon metabolism; tetrahydrofolate interconversion. Catalyzes the oxidation of 5,10-methylenetetrahydrofolate to 5,10-methenyltetrahydrofolate and then the hydrolysis of 5,10-methenyltetrahydrofolate to 10-formyltetrahydrofolate. The chain is Bifunctional protein FolD from Chlamydia trachomatis serovar D (strain ATCC VR-885 / DSM 19411 / UW-3/Cx).